Reading from the N-terminus, the 68-residue chain is Large ribosomal subunit protein bL33c (68 aa).

The protein belongs to the bacterial ribosomal protein bL33 family.

It is found in the plastid. The protein localises to the chloroplast. This chain is Large ribosomal subunit protein bL33c, found in Lactuca sativa (Garden lettuce).